The sequence spans 460 residues: Putative glycoside/cation symporter YagG (460 aa).

Residues 1 to 9 (MTQLTMKDK) lie on the Cytoplasmic side of the membrane. The next 2 membrane-spanning stretches (helical) occupy residues 10-30 (IGYG…MFLL) and 31-51 (AYFY…LFLV). The Cytoplasmic portion of the chain corresponds to 52–78 (SRVLDAVTDPLMGLLVDRTRTRHGQFR). The helical transmembrane segment at 79–99 (PFLLWGAIPFGIVCVLTFYTP) threads the bilayer. At 100–106 (DFSAQGK) the chain is on the periplasmic side. The chain crosses the membrane as a helical span at residues 107–127 (IIYACVTYILLTLVYTFVNVP). The Cytoplasmic segment spans residues 128 to 150 (YCAMPGVITADPKERHALQSWRF). Residues 151 to 171 (FLAAAGSLAISGIALPLVSII) traverse the membrane as a helical segment. Residues 172–179 (GKGDEQVG) lie on the Periplasmic side of the membrane. A helical transmembrane segment spans residues 180-200 (YFGAMCVLGLSGVVLLYVCFF). Residues 201-262 (TTKERYTFEV…FVKYVMDHPE (62 aa)) lie on the Cytoplasmic side of the membrane. The chain crosses the membrane as a helical span at residues 263–283 (LATQFLLYGSLATMFGSLCSS). At 284-308 (RLLGRFDRVTAFKWIIVAYSLISLL) the chain is on the periplasmic side. The helical transmembrane segment at 309 to 329 (IFVTPAEHIALIFALNILFLF) threads the bilayer. Over 330-366 (VFNTTTPLQWLMASDVVDYEESRSGRRLDGLVFSTYL) the chain is Cytoplasmic. A helical membrane pass occupies residues 367-387 (FSLKIGLAIGGAVVGWILAYV). The Periplasmic segment spans residues 388–405 (NYSASSSVQPVEVLTTIK). Residues 406 to 426 (ILFCVVPVVLYAGMFIMLSLY) form a helical membrane-spanning segment. The Cytoplasmic segment spans residues 427 to 460 (KLTDARVEAISRQLIKHRAAQGEAVPDAATAASH).

The protein belongs to the sodium:galactoside symporter (TC 2.A.2) family.

The protein localises to the cell inner membrane. The chain is Putative glycoside/cation symporter YagG (yagG) from Escherichia coli (strain K12).